The chain runs to 101 residues: Movement protein (101 aa).

The chain crosses the membrane as a helical span at residues Glu30–Leu50.

The protein belongs to the mastrevirus movement protein family. Interacts with the capsid protein (CP). Part of a MP-CP-viral DNA complex.

It is found in the host membrane. Functionally, involved in the viral transport within, and between cells. This chain is Movement protein, found in Maize streak virus genotype D (isolate Raw) (MSV).